We begin with the raw amino-acid sequence, 862 residues long: Rho guanine nucleotide exchange factor 7 (862 aa).

The region spanning 1–112 is the Calponin-homology (CH) domain; sequence MNSAEQTVTW…SLVTLNKVTA (112 aa). Phosphoserine occurs at positions 132, 155, 164, 228, and 236. Positions 163-222 constitute an SH3 domain; the sequence is NSQLVVRAKFNFQQTNEDELSFSKGDVIHVTRVEEGGWWEGTHNGRTGWFPSNYVREIKP. The DH domain occupies 250 to 430; the sequence is YYNVVLQNIL…KNLSAQCQEV (181 aa). The PH domain maps to 452 to 557; the sequence is DIKTLGSVTY…WVEHLQKQTK (106 aa). At S497 the chain carries Phosphoserine. 3 disordered regions span residues 559 to 591, 657 to 679, and 728 to 748; these read TSVS…ADSK, KTMK…EFAV, and DQSS…EPSD. Polar residues predominate over residues 572-585; the sequence is PSHTLPSHPLTPSS. The span at 657–669 shows a compositional bias: basic residues; the sequence is KTMKKLLPKRKPE. Residues 670 to 679 show a composition bias toward basic and acidic residues; the sequence is RKPSDEEFAV. S673 bears the Phosphoserine mark. Residues 731–744 show a composition bias toward low complexity; the sequence is SLDSLGRRSSLSRL. S776 carries the post-translational modification Phosphoserine. Residues 804 to 854 adopt a coiled-coil conformation; the sequence is KSLVDTVYALKDEVQELRQDNKKMKKSLEEEQRARKDLEKLVRKVLKNMND.

In terms of assembly, interacts with PAK kinases through the SH3 domain. Interacts with unphosphorylated PAK1. Interacts with ITCH. Interacts with SCRIB; interaction is direct and may play a role in regulation of apoptosis. Interacts with GIT1 and TGFB1I1. Interacts with FRMPD4 (via N-terminus). Interacts with CaMK1. Interacts with BIN2. Interacts with PTK2/FAK1 and RAC1. Interacts with PARVB. Interacts with YWHAZ. Interacts (via PH domain) with NOX1 (via FAD-binding FR-type domain). In terms of processing, phosphorylated on Ser-673 by CaMK1; enhancement of GEF activity and downstream activation of RAC1. Phosphorylated by PTK2/FAK1; this promotes interaction with RAC1. Seems to be expressed in the central nervous system. Isoform B, isoform C and isoform E are expressed with highest levels in brain and testis.

The protein resides in the cell junction. The protein localises to the focal adhesion. It is found in the cell projection. Its subcellular location is the ruffle. It localises to the cytoplasm. The protein resides in the cell cortex. The protein localises to the lamellipodium. Its function is as follows. Acts as a RAC1 guanine nucleotide exchange factor (GEF) and can induce membrane ruffling. May function as a positive regulator of apoptosis. Functions in cell migration, attachment and cell spreading. Promotes targeting of RAC1 to focal adhesions. Downstream of NMDA receptors and CaMKK-CaMK1 signaling cascade, promotes the formation of spines and synapses in hippocampal neurons. This Mus musculus (Mouse) protein is Rho guanine nucleotide exchange factor 7 (Arhgef7).